Reading from the N-terminus, the 102-residue chain is Carboxysome shell protein CcmK3 (102 aa).

Positions 4-90 (AVGVIQTDGF…PPDNVETVMP (87 aa)) constitute a BMC domain.

Belongs to the bacterial microcompartments protein family. CcmK subfamily. Interacts stably with CcmK4, forming heterohexamers that can make dodecamers. Heterohexamers have a 1:2 CcmK3:CcmK4 stoichiometry. Upon expression in E.coli forms oligomers that could be dimers or trimers, but never hexamers; bulky residues in the pore region probably preclude the formation of homohexamers.

It localises to the carboxysome. In terms of biological role, a probably non-essential, minor shell protein of the carboxysome, a polyhedral inclusion where RuBisCO (ribulose bisphosphate carboxylase, rbcL-rbcS) is sequestered. Hexamers form sheets that form the facets of the polyhedral carboxysome. In PCC 7418 there are several CcmK paralogs with presumably functional differences. This subunit probably only makes heterohexamers with CcmK4. Heterohexamers can also make dodecamers, formation depends on buffer conditions. The protein is Carboxysome shell protein CcmK3 of Halothece sp. (strain PCC 7418) (Synechococcus sp. (strain PCC 7418)).